The following is a 182-amino-acid chain: ATP-dependent protease subunit HslV (182 aa).

The active site involves T10. Na(+) is bound by residues A166, C169, and S172.

This sequence belongs to the peptidase T1B family. HslV subfamily. As to quaternary structure, a double ring-shaped homohexamer of HslV is capped on each side by a ring-shaped HslU homohexamer. The assembly of the HslU/HslV complex is dependent on binding of ATP.

The protein localises to the cytoplasm. The enzyme catalyses ATP-dependent cleavage of peptide bonds with broad specificity.. With respect to regulation, allosterically activated by HslU binding. Its function is as follows. Protease subunit of a proteasome-like degradation complex believed to be a general protein degrading machinery. In Rickettsia felis (strain ATCC VR-1525 / URRWXCal2) (Rickettsia azadi), this protein is ATP-dependent protease subunit HslV.